The sequence spans 718 residues: Catalase-peroxidase 1 (718 aa).

Residues 93–221 constitute a cross-link (tryptophyl-tyrosyl-methioninium (Trp-Tyr) (with M-247)); the sequence is WHSAGTYRIA…LAAVMMGLIY (129 aa). His94 acts as the Proton acceptor in catalysis. Positions 221 to 247 form a cross-link, tryptophyl-tyrosyl-methioninium (Tyr-Met) (with W-93); sequence YVNPEGVDGNPDPLKTAQDMRVTFARM. Heme b is bound at residue His262.

The protein belongs to the peroxidase family. Peroxidase/catalase subfamily. Homodimer or homotetramer. Heme b serves as cofactor. Formation of the three residue Trp-Tyr-Met cross-link is important for the catalase, but not the peroxidase activity of the enzyme.

The enzyme catalyses H2O2 + AH2 = A + 2 H2O. It carries out the reaction 2 H2O2 = O2 + 2 H2O. Its function is as follows. Bifunctional enzyme with both catalase and broad-spectrum peroxidase activity. The sequence is that of Catalase-peroxidase 1 from Shewanella amazonensis (strain ATCC BAA-1098 / SB2B).